We begin with the raw amino-acid sequence, 98 residues long: NADH-ubiquinone oxidoreductase chain 4L (98 aa).

3 helical membrane passes run 1–21, 25–45, and 59–81; these read MSLA…GLLM, HLMS…VMAT, and MPII…LVMV.

The protein belongs to the complex I subunit 4L family. In terms of assembly, core subunit of respiratory chain NADH dehydrogenase (Complex I) which is composed of 45 different subunits.

It is found in the mitochondrion inner membrane. The enzyme catalyses a ubiquinone + NADH + 5 H(+)(in) = a ubiquinol + NAD(+) + 4 H(+)(out). Its function is as follows. Core subunit of the mitochondrial membrane respiratory chain NADH dehydrogenase (Complex I) which catalyzes electron transfer from NADH through the respiratory chain, using ubiquinone as an electron acceptor. Part of the enzyme membrane arm which is embedded in the lipid bilayer and involved in proton translocation. This chain is NADH-ubiquinone oxidoreductase chain 4L (MT-ND4L), found in Equus asinus (Donkey).